The primary structure comprises 151 residues: MESPVRFEHVDIATILKTLPHRYPFLLIDRVLNIRADHSGIGVKNVTFNEPAFQGHFPERPVYPGVLMIEGMAQTAGVIGIMSVEGTEKPRAVYFLTIDKCKFRKPVMPGDIVEYHMRSIGRRKTMWWFHGDAKVNGTIVAEADVGAMLTD.

His56 is a catalytic residue.

It belongs to the thioester dehydratase family. FabZ subfamily.

It is found in the cytoplasm. It carries out the reaction a (3R)-hydroxyacyl-[ACP] = a (2E)-enoyl-[ACP] + H2O. Functionally, involved in unsaturated fatty acids biosynthesis. Catalyzes the dehydration of short chain beta-hydroxyacyl-ACPs and long chain saturated and unsaturated beta-hydroxyacyl-ACPs. The chain is 3-hydroxyacyl-[acyl-carrier-protein] dehydratase FabZ from Nitrobacter winogradskyi (strain ATCC 25391 / DSM 10237 / CIP 104748 / NCIMB 11846 / Nb-255).